The sequence spans 310 residues: GPN-loop GTPase 2 (310 aa).

The residue at position 2 (Ala2) is an N-acetylalanine. Gly19–Thr24 lines the GTP pocket. The Gly-Pro-Asn (GPN)-loop; involved in dimer interface signature appears at Gly76 to Asn78. Ser178–Asp181 serves as a coordination point for GTP.

This sequence belongs to the GPN-loop GTPase family. Heterodimers with GPN1 or GPN3. Binds to RNA polymerase II (RNAPII).

Its function is as follows. Small GTPase required for proper localization of RNA polymerase II and III (RNAPII and RNAPIII). May act at an RNAP assembly step prior to nuclear import. The polypeptide is GPN-loop GTPase 2 (Sus scrofa (Pig)).